The following is a 246-amino-acid chain: Small ribosomal subunit protein uS2 (246 aa).

Belongs to the universal ribosomal protein uS2 family.

The chain is Small ribosomal subunit protein uS2 from Pseudomonas paraeruginosa (strain DSM 24068 / PA7) (Pseudomonas aeruginosa (strain PA7)).